An 85-amino-acid chain; its full sequence is Large ribosomal subunit protein bL27 (85 aa).

The disordered stretch occupies residues 1–27 (MAHKKAGGSTKNGRDSQSKRLGVKRYG).

Belongs to the bacterial ribosomal protein bL27 family.

This chain is Large ribosomal subunit protein bL27, found in Halorhodospira halophila (strain DSM 244 / SL1) (Ectothiorhodospira halophila (strain DSM 244 / SL1)).